Here is a 258-residue protein sequence, read N- to C-terminus: NAD kinase (258 aa).

The Proton acceptor role is filled by Asp45. NAD(+) is bound by residues 45–46, 117–118, Asp147, Ala155, 158–163, and Ala182; these read DG, NE, and TAYNYS.

The protein belongs to the NAD kinase family. Requires a divalent metal cation as cofactor.

The protein resides in the cytoplasm. The enzyme catalyses NAD(+) + ATP = ADP + NADP(+) + H(+). Its function is as follows. Involved in the regulation of the intracellular balance of NAD and NADP, and is a key enzyme in the biosynthesis of NADP. Catalyzes specifically the phosphorylation on 2'-hydroxyl of the adenosine moiety of NAD to yield NADP. The protein is NAD kinase of Xanthomonas oryzae pv. oryzae (strain MAFF 311018).